The sequence spans 444 residues: Tubulin beta chain (444 aa).

GTP is bound by residues glutamine 11, glutamate 69, serine 138, glycine 142, threonine 143, glycine 144, asparagine 204, and asparagine 226. Residue glutamate 69 coordinates Mg(2+). The interval 423–444 is disordered; it reads QQYQDATAEEEGEFDDEEEMDV. Over residues 429–444 the composition is skewed to acidic residues; it reads TAEEEGEFDDEEEMDV.

Belongs to the tubulin family. As to quaternary structure, dimer of alpha and beta chains. A typical microtubule is a hollow water-filled tube with an outer diameter of 25 nm and an inner diameter of 15 nM. Alpha-beta heterodimers associate head-to-tail to form protofilaments running lengthwise along the microtubule wall with the beta-tubulin subunit facing the microtubule plus end conferring a structural polarity. Microtubules usually have 13 protofilaments but different protofilament numbers can be found in some organisms and specialized cells. Mg(2+) serves as cofactor.

The protein resides in the cytoplasm. It localises to the cytoskeleton. Functionally, tubulin is the major constituent of microtubules, a cylinder consisting of laterally associated linear protofilaments composed of alpha- and beta-tubulin heterodimers. Microtubules grow by the addition of GTP-tubulin dimers to the microtubule end, where a stabilizing cap forms. Below the cap, tubulin dimers are in GDP-bound state, owing to GTPase activity of alpha-tubulin. This Euplotes focardii protein is Tubulin beta chain.